The chain runs to 91 residues: Small integral membrane protein 12 (91 aa).

A helical membrane pass occupies residues 12 to 34 (YAPYVTFPVAFVVGAVGYHLEWF).

It belongs to the SMIM12 family.

It localises to the membrane. The sequence is that of Small integral membrane protein 12 (smim12) from Danio rerio (Zebrafish).